A 478-amino-acid polypeptide reads, in one-letter code: UDP-N-acetylmuramate--L-alanine ligase (478 aa).

122–128 provides a ligand contact to ATP; sequence GTHGKTT.

This sequence belongs to the MurCDEF family.

The protein resides in the cytoplasm. It catalyses the reaction UDP-N-acetyl-alpha-D-muramate + L-alanine + ATP = UDP-N-acetyl-alpha-D-muramoyl-L-alanine + ADP + phosphate + H(+). It participates in cell wall biogenesis; peptidoglycan biosynthesis. Cell wall formation. In Stenotrophomonas maltophilia (strain K279a), this protein is UDP-N-acetylmuramate--L-alanine ligase.